The primary structure comprises 531 residues: T-complex protein 1 subunit zeta (531 aa).

Ala-2 is subject to N-acetylalanine. Lys-5 is subject to N6-acetyllysine. Gly-39 contributes to the ADP binding site. An ATP-binding site is contributed by Gly-39. Residue Asp-90 coordinates Mg(2+). The ADP site is built by Gly-91, Thr-92, Thr-93, Ser-94, Thr-158, and Lys-159. ATP contacts are provided by Gly-91, Thr-92, and Thr-93. Position 199 is an N6-acetyllysine (Lys-199). Position 205 is a phosphoserine (Ser-205). A Glycyl lysine isopeptide (Lys-Gly) (interchain with G-Cter in SUMO2) cross-link involves residue Lys-251. Lys-287, Lys-365, Lys-377, and Lys-388 each carry N6-acetyllysine. Ala-411 serves as a coordination point for ADP. Residues Ala-411, Gly-412, Asp-496, and Lys-501 each coordinate ATP. Residue Asp-496 participates in ADP binding.

This sequence belongs to the TCP-1 chaperonin family. In terms of assembly, component of the chaperonin-containing T-complex (TRiC), a hexadecamer composed of two identical back-to-back stacked rings enclosing a protein folding chamber. Each ring is made up of eight different subunits: TCP1/CCT1, CCT2, CCT3, CCT4, CCT5, CCT6A/CCT6, CCT7, CCT8. Interacts with PACRG.

The protein resides in the cytoplasm. The catalysed reaction is ATP + H2O = ADP + phosphate + H(+). Functionally, component of the chaperonin-containing T-complex (TRiC), a molecular chaperone complex that assists the folding of actin, tubulin and other proteins upon ATP hydrolysis. The TRiC complex mediates the folding of WRAP53/TCAB1, thereby regulating telomere maintenance. The sequence is that of T-complex protein 1 subunit zeta (CCT6) from Pongo abelii (Sumatran orangutan).